The chain runs to 451 residues: 23S rRNA (uracil(1939)-C(5))-methyltransferase RlmD (451 aa).

One can recognise a TRAM domain in the interval 20–78 (QIPAGKKQRLTIERLSDDGRGIAFLEGKTWFVAGSLAGEEVEARVLNARGKVVEARTER). [4Fe-4S] cluster-binding residues include C91, C97, C100, and C179. Positions 283, 312, 317, 333, 360, and 381 each coordinate S-adenosyl-L-methionine. The Nucleophile role is filled by C407.

This sequence belongs to the class I-like SAM-binding methyltransferase superfamily. RNA M5U methyltransferase family. RlmD subfamily.

The enzyme catalyses uridine(1939) in 23S rRNA + S-adenosyl-L-methionine = 5-methyluridine(1939) in 23S rRNA + S-adenosyl-L-homocysteine + H(+). Its function is as follows. Catalyzes the formation of 5-methyl-uridine at position 1939 (m5U1939) in 23S rRNA. This chain is 23S rRNA (uracil(1939)-C(5))-methyltransferase RlmD, found in Pseudomonas savastanoi pv. phaseolicola (strain 1448A / Race 6) (Pseudomonas syringae pv. phaseolicola (strain 1448A / Race 6)).